The sequence spans 129 residues: Small ribosomal subunit protein uS11 (129 aa).

Belongs to the universal ribosomal protein uS11 family. Part of the 30S ribosomal subunit. Interacts with proteins S7 and S18. Binds to IF-3.

Its function is as follows. Located on the platform of the 30S subunit, it bridges several disparate RNA helices of the 16S rRNA. Forms part of the Shine-Dalgarno cleft in the 70S ribosome. This chain is Small ribosomal subunit protein uS11, found in Jannaschia sp. (strain CCS1).